The following is a 215-amino-acid chain: Pyrrolidone-carboxylate peptidase (215 aa).

Catalysis depends on residues Glu-80, Cys-143, and His-167.

Belongs to the peptidase C15 family. As to quaternary structure, homotetramer.

It is found in the cytoplasm. The enzyme catalyses Release of an N-terminal pyroglutamyl group from a polypeptide, the second amino acid generally not being Pro.. Removes 5-oxoproline from various penultimate amino acid residues except L-proline. The polypeptide is Pyrrolidone-carboxylate peptidase (Bacillus mycoides (strain KBAB4) (Bacillus weihenstephanensis)).